A 270-amino-acid chain; its full sequence is UPF0162 protein VC_2176 (270 aa).

This sequence belongs to the UPF0162 family.

The protein is UPF0162 protein VC_2176 of Vibrio cholerae serotype O1 (strain ATCC 39315 / El Tor Inaba N16961).